Consider the following 282-residue polypeptide: HTH-type transcriptional activator RhaR (282 aa).

An HTH araC/xylS-type domain is found at 179–277; the sequence is DKLITRLAAS…GMTPSQWRHL (99 aa). 2 consecutive DNA-binding regions (H-T-H motif) follow at residues 196–217 and 244–267; these read DKFCDEASCSERVLRQQFRQQT and ISDISTECGFEDSNYFSVVFTRET.

As to quaternary structure, binds DNA as a dimer.

The protein localises to the cytoplasm. Its function is as follows. Activates expression of the rhaSR operon in response to L-rhamnose. In Shigella dysenteriae serotype 1 (strain Sd197), this protein is HTH-type transcriptional activator RhaR.